Here is a 125-residue protein sequence, read N- to C-terminus: Histone H2A (125 aa).

Basic residues predominate over residues 1 to 18 (MSGRGKGGKAKAKAKSRS). A disordered region spans residues 1–21 (MSGRGKGGKAKAKAKSRSSRA). An N-acetylserine modification is found at S2. Q104 is subject to N5-methylglutamine.

Belongs to the histone H2A family. The nucleosome is a histone octamer containing two molecules each of H2A, H2B, H3 and H4 assembled in one H3-H4 heterotetramer and two H2A-H2B heterodimers. The octamer wraps approximately 147 bp of DNA.

The protein resides in the nucleus. It localises to the chromosome. Core component of nucleosome. Nucleosomes wrap and compact DNA into chromatin, limiting DNA accessibility to the cellular machineries which require DNA as a template. Histones thereby play a central role in transcription regulation, DNA repair, DNA replication and chromosomal stability. DNA accessibility is regulated via a complex set of post-translational modifications of histones, also called histone code, and nucleosome remodeling. The chain is Histone H2A from Mytilus trossulus (Blue mussel).